A 244-amino-acid chain; its full sequence is Phosphoadenosine 5'-phosphosulfate reductase (244 aa).

Cys239 acts as the Nucleophile; cysteine thiosulfonate intermediate in catalysis.

It belongs to the PAPS reductase family. CysH subfamily.

It is found in the cytoplasm. It catalyses the reaction [thioredoxin]-disulfide + sulfite + adenosine 3',5'-bisphosphate + 2 H(+) = [thioredoxin]-dithiol + 3'-phosphoadenylyl sulfate. It participates in sulfur metabolism; hydrogen sulfide biosynthesis; sulfite from sulfate: step 3/3. In terms of biological role, catalyzes the formation of sulfite from phosphoadenosine 5'-phosphosulfate (PAPS) using thioredoxin as an electron donor. This chain is Phosphoadenosine 5'-phosphosulfate reductase, found in Salmonella heidelberg (strain SL476).